The following is a 321-amino-acid chain: tRNA-dihydrouridine synthase B (321 aa).

FMN contacts are provided by residues 16-18 (PMA) and Gln70. Residue Cys100 is the Proton donor of the active site. Residues Lys139, 200–202 (NGD), and 224–225 (GR) contribute to the FMN site.

The protein belongs to the Dus family. DusB subfamily. Requires FMN as cofactor.

The catalysed reaction is a 5,6-dihydrouridine in tRNA + NAD(+) = a uridine in tRNA + NADH + H(+). It carries out the reaction a 5,6-dihydrouridine in tRNA + NADP(+) = a uridine in tRNA + NADPH + H(+). In terms of biological role, catalyzes the synthesis of 5,6-dihydrouridine (D), a modified base found in the D-loop of most tRNAs, via the reduction of the C5-C6 double bond in target uridines. In Klebsiella pneumoniae, this protein is tRNA-dihydrouridine synthase B.